Consider the following 401-residue polypeptide: Heat shock transcription factor, Y-linked (401 aa).

Positions 1 to 11 are enriched in polar residues; that stretch reads MAHVSSETQDV. Residues 1–30 are disordered; the sequence is MAHVSSETQDVSPKDELTASEASTRSPLCE. Residues 76 to 194 mediate DNA binding; that stretch reads LSLNFPRKLW…PQLLVRVKRR (119 aa).

Belongs to the HSF family. Testis-specific. Present in Sertoli cells and spermatogenic cells (at protein level).

The protein resides in the nucleus. It localises to the cytoplasm. The chain is Heat shock transcription factor, Y-linked (HSFY1) from Homo sapiens (Human).